The primary structure comprises 388 residues: Succinate--CoA ligase [ADP-forming] subunit beta (388 aa).

The 237-residue stretch at 9-245 (KELLAGYGLP…KSQENERELK (237 aa)) folds into the ATP-grasp domain. ATP contacts are provided by residues K46, 53-55 (GRG), E100, Y103, and E108. Positions 200 and 214 each coordinate Mg(2+). Substrate is bound by residues N265 and 322–324 (GIV).

Belongs to the succinate/malate CoA ligase beta subunit family. As to quaternary structure, heterotetramer of two alpha and two beta subunits. Mg(2+) serves as cofactor.

The enzyme catalyses succinate + ATP + CoA = succinyl-CoA + ADP + phosphate. It catalyses the reaction GTP + succinate + CoA = succinyl-CoA + GDP + phosphate. The protein operates within carbohydrate metabolism; tricarboxylic acid cycle; succinate from succinyl-CoA (ligase route): step 1/1. Functionally, succinyl-CoA synthetase functions in the citric acid cycle (TCA), coupling the hydrolysis of succinyl-CoA to the synthesis of either ATP or GTP and thus represents the only step of substrate-level phosphorylation in the TCA. The beta subunit provides nucleotide specificity of the enzyme and binds the substrate succinate, while the binding sites for coenzyme A and phosphate are found in the alpha subunit. This Neisseria meningitidis serogroup C (strain 053442) protein is Succinate--CoA ligase [ADP-forming] subunit beta.